A 302-amino-acid chain; its full sequence is DNA-binding transcriptional activator HetR (302 aa).

Serine 153 is an active-site residue.

The protein belongs to the peptidase S48 family. In terms of assembly, homodimer; disulfide-linked.

Functionally, might be involved in temporal and/or spatial regulation of nitrogen fixation. Dimerization is required for DNA-binding. Has both a protease and a DNA-binding activity. The chain is DNA-binding transcriptional activator HetR from Trichodesmium erythraeum (strain IMS101).